A 109-amino-acid polypeptide reads, in one-letter code: Large ribosomal subunit protein uL22 (109 aa).

This sequence belongs to the universal ribosomal protein uL22 family. As to quaternary structure, part of the 50S ribosomal subunit.

This protein binds specifically to 23S rRNA; its binding is stimulated by other ribosomal proteins, e.g. L4, L17, and L20. It is important during the early stages of 50S assembly. It makes multiple contacts with different domains of the 23S rRNA in the assembled 50S subunit and ribosome. In terms of biological role, the globular domain of the protein is located near the polypeptide exit tunnel on the outside of the subunit, while an extended beta-hairpin is found that lines the wall of the exit tunnel in the center of the 70S ribosome. The polypeptide is Large ribosomal subunit protein uL22 (Leptothrix cholodnii (strain ATCC 51168 / LMG 8142 / SP-6) (Leptothrix discophora (strain SP-6))).